A 517-amino-acid polypeptide reads, in one-letter code: 2-isopropylmalate synthase (517 aa).

A Pyruvate carboxyltransferase domain is found at 7 to 269 (VIIFDTTLRD…ETGIDTTQIV (263 aa)). Positions 16, 204, 206, and 240 each coordinate Mn(2+). The interval 366-517 (LADKKREIFD…KPKAQGSGTI (152 aa)) is required for the condensation reaction. Not required to bind substrate. Residues 395-517 (KFISQKISTE…KPKAQGSGTI (123 aa)) are regulatory domain.

This sequence belongs to the alpha-IPM synthase/homocitrate synthase family. LeuA type 1 subfamily. As to quaternary structure, homodimer. Remains a homodimer in the presence of L-leucine. Mn(2+) is required as a cofactor.

The protein resides in the cytoplasm. The catalysed reaction is 3-methyl-2-oxobutanoate + acetyl-CoA + H2O = (2S)-2-isopropylmalate + CoA + H(+). It functions in the pathway amino-acid biosynthesis; L-leucine biosynthesis; L-leucine from 3-methyl-2-oxobutanoate: step 1/4. Inhibited by 3-bromo substituents and Leu, the pathway end product. Its function is as follows. Catalyzes the condensation of the acetyl group of acetyl-CoA with 3-methyl-2-oxobutanoate (2-ketoisovalerate) to form 3-carboxy-3-hydroxy-4-methylpentanoate (2-isopropylmalate). Complements an E.coli deletion. The polypeptide is 2-isopropylmalate synthase (Neisseria meningitidis serogroup B (strain ATCC BAA-335 / MC58)).